Reading from the N-terminus, the 359-residue chain is DNA replication and repair protein RecF (359 aa).

Position 30–37 (30–37 (GPNGSGKT)) interacts with ATP.

Belongs to the RecF family.

The protein resides in the cytoplasm. Functionally, the RecF protein is involved in DNA metabolism; it is required for DNA replication and normal SOS inducibility. RecF binds preferentially to single-stranded, linear DNA. It also seems to bind ATP. This is DNA replication and repair protein RecF from Aliivibrio fischeri (strain MJ11) (Vibrio fischeri).